The sequence spans 649 residues: Protein teflon (649 aa).

A C2H2-type 1 zinc finger spans residues 33–56 (LYCHFCRDLFTQLPEFLRHLQSNH). The interval 78 to 126 (EQGKAHEDAQSAGHNSSSGDSSSLMNSEDSRAIEGSEDNSDNSPMKPEQ) is disordered. Low complexity predominate over residues 88 to 104 (SAGHNSSSGDSSSLMNS). C2H2-type zinc fingers lie at residues 599-621 (YFCKCCDDIFILKKEYLKHLISH) and 625-648 (FQCTKCIKVFKYKGYYEKHLRNAH).

Belongs to the Teflon family. Expressed at a low level in a variety of tissues, highest expression is in testis.

The protein resides in the nucleus. It is found in the chromosome. In terms of biological role, specifically required in males for proper segregation of autosomal bivalents at meiosis I. Expression is required in the male germ line prior to spermatocyte stage S4. May have a role as a bridging molecule maintaining adhesion to hold autosome bivalents together via heterochromatic connections. This is Protein teflon from Drosophila melanogaster (Fruit fly).